We begin with the raw amino-acid sequence, 261 residues long: Cytochrome c oxidase subunit 3 (261 aa).

Over 1–15 (MTHQAHAYHMVDPSP) the chain is Mitochondrial matrix. A helical transmembrane segment spans residues 16-34 (WPLTGAVAALLMTSGLAVW). The Mitochondrial intermembrane segment spans residues 35 to 40 (FHFHST). Residues 41–66 (TLMALGTVLLLLTMYQWWRDIIREGT) traverse the membrane as a helical segment. Topologically, residues 67-72 (FQGHHT) are mitochondrial matrix. Residues 73–105 (PPVQKGLRYGMILFITSEVFFFLGFFWAFYHAS) traverse the membrane as a helical segment. The Mitochondrial intermembrane segment spans residues 106 to 128 (LAPTPELGGCWPPTGITTLDPFE). A helical transmembrane segment spans residues 129–152 (VPLLNTAVLLASGVTVTWAHHSIM). At 153-155 (EGE) the chain is on the mitochondrial matrix side. Residues 156–183 (RKQAIHSLTLTILLGFYFTFLQGLEYYD) traverse the membrane as a helical segment. The Mitochondrial intermembrane segment spans residues 184 to 190 (APFTIAD). Residues 191–223 (GVYGSTFFVATGFHGLHVIIGSTFLAVCLLRQI) traverse the membrane as a helical segment. Residues 224-232 (RYHFTSEHH) lie on the Mitochondrial matrix side of the membrane. Residues 233–256 (FGFEAAAWYWHFVDVVWLFLYISI) form a helical membrane-spanning segment. At 257–261 (YWWGS) the chain is on the mitochondrial intermembrane side.

This sequence belongs to the cytochrome c oxidase subunit 3 family. As to quaternary structure, component of the cytochrome c oxidase (complex IV, CIV), a multisubunit enzyme composed of 14 subunits. The complex is composed of a catalytic core of 3 subunits MT-CO1, MT-CO2 and MT-CO3, encoded in the mitochondrial DNA, and 11 supernumerary subunits COX4I, COX5A, COX5B, COX6A, COX6B, COX6C, COX7A, COX7B, COX7C, COX8 and NDUFA4, which are encoded in the nuclear genome. The complex exists as a monomer or a dimer and forms supercomplexes (SCs) in the inner mitochondrial membrane with NADH-ubiquinone oxidoreductase (complex I, CI) and ubiquinol-cytochrome c oxidoreductase (cytochrome b-c1 complex, complex III, CIII), resulting in different assemblies (supercomplex SCI(1)III(2)IV(1) and megacomplex MCI(2)III(2)IV(2)).

The protein localises to the mitochondrion inner membrane. It carries out the reaction 4 Fe(II)-[cytochrome c] + O2 + 8 H(+)(in) = 4 Fe(III)-[cytochrome c] + 2 H2O + 4 H(+)(out). Functionally, component of the cytochrome c oxidase, the last enzyme in the mitochondrial electron transport chain which drives oxidative phosphorylation. The respiratory chain contains 3 multisubunit complexes succinate dehydrogenase (complex II, CII), ubiquinol-cytochrome c oxidoreductase (cytochrome b-c1 complex, complex III, CIII) and cytochrome c oxidase (complex IV, CIV), that cooperate to transfer electrons derived from NADH and succinate to molecular oxygen, creating an electrochemical gradient over the inner membrane that drives transmembrane transport and the ATP synthase. Cytochrome c oxidase is the component of the respiratory chain that catalyzes the reduction of oxygen to water. Electrons originating from reduced cytochrome c in the intermembrane space (IMS) are transferred via the dinuclear copper A center (CU(A)) of subunit 2 and heme A of subunit 1 to the active site in subunit 1, a binuclear center (BNC) formed by heme A3 and copper B (CU(B)). The BNC reduces molecular oxygen to 2 water molecules using 4 electrons from cytochrome c in the IMS and 4 protons from the mitochondrial matrix. The protein is Cytochrome c oxidase subunit 3 (mt-co3) of Gadus morhua (Atlantic cod).